We begin with the raw amino-acid sequence, 314 residues long: ATP synthase gamma chain (314 aa).

Belongs to the ATPase gamma chain family. As to quaternary structure, F-type ATPases have 2 components, CF(1) - the catalytic core - and CF(0) - the membrane proton channel. CF(1) has five subunits: alpha(3), beta(3), gamma(1), delta(1), epsilon(1). CF(0) has three main subunits: a, b and c.

The protein localises to the cellular thylakoid membrane. Its function is as follows. Produces ATP from ADP in the presence of a proton gradient across the membrane. The gamma chain is believed to be important in regulating ATPase activity and the flow of protons through the CF(0) complex. This is ATP synthase gamma chain from Synechococcus sp. (strain JA-2-3B'a(2-13)) (Cyanobacteria bacterium Yellowstone B-Prime).